A 503-amino-acid polypeptide reads, in one-letter code: Cytochrome P450 3A43 (503 aa).

Heme is bound at residue C442.

The protein belongs to the cytochrome P450 family. Heme serves as cofactor. As to expression, highest expression level in prostate. Also expressed in liver, kidney, pancreas, fetal liver and fetal skeletal muscle.

The protein localises to the endoplasmic reticulum membrane. The protein resides in the microsome membrane. It carries out the reaction an organic molecule + reduced [NADPH--hemoprotein reductase] + O2 = an alcohol + oxidized [NADPH--hemoprotein reductase] + H2O + H(+). Functionally, exhibits low testosterone 6-beta-hydroxylase activity. This Homo sapiens (Human) protein is Cytochrome P450 3A43 (CYP3A43).